The sequence spans 208 residues: Fucoxanthin-chlorophyll a-c binding protein, chloroplastic (208 aa).

The N-terminal 31 residues, methionine 1–glutamate 31, are a transit peptide targeting the chloroplast. The chain crosses the membrane as a helical span at residues isoleucine 102 to glycine 118.

The protein belongs to the fucoxanthin chlorophyll protein family. In terms of assembly, the LHC complex of chromophytic algae is composed of fucoxanthin, chlorophyll A and C bound non-covalently by fucoxanthin chlorophyll proteins (FCPs). The ratio of pigments in this LHC is; fucoxanthin: chlorophyll C: chlorophyll A; (0.6-1): (0.1-0.3): (1).

Its subcellular location is the plastid. The protein localises to the chloroplast thylakoid membrane. Its function is as follows. The light-harvesting complex (LHC) functions as a light receptor, it captures and delivers excitation energy to photosystems with which it is closely associated. Energy is transferred from the carotenoid and chlorophyll C (or B) to chlorophyll A and the photosynthetic reaction centers where it is used to synthesize ATP and reducing power. This chain is Fucoxanthin-chlorophyll a-c binding protein, chloroplastic (FCP), found in Isochrysis galbana (Marine planktonic alga).